We begin with the raw amino-acid sequence, 507 residues long: Histidine ammonia-lyase (507 aa).

The 5-imidazolinone (Ala-Gly) cross-link spans 142–144 (ASG). 2,3-didehydroalanine (Ser) is present on serine 143.

Belongs to the PAL/histidase family. Contains an active site 4-methylidene-imidazol-5-one (MIO), which is formed autocatalytically by cyclization and dehydration of residues Ala-Ser-Gly.

The protein resides in the cytoplasm. It catalyses the reaction L-histidine = trans-urocanate + NH4(+). The protein operates within amino-acid degradation; L-histidine degradation into L-glutamate; N-formimidoyl-L-glutamate from L-histidine: step 1/3. The sequence is that of Histidine ammonia-lyase from Symbiobacterium thermophilum (strain DSM 24528 / JCM 14929 / IAM 14863 / T).